Reading from the N-terminus, the 508-residue chain is Cytochrome P450 monooxygenase lepD (508 aa).

The chain crosses the membrane as a helical span at residues 22–42; that stretch reads IAAAVAVVASIVIYLALSSFF. N-linked (GlcNAc...) asparagine glycosylation is found at N53 and N416. Position 454 (C454) interacts with heme.

The protein belongs to the cytochrome P450 family. Heme serves as cofactor.

The protein localises to the membrane. Its function is as follows. Cytochrome P450 monooxygenase; part of the gene cluster 23 that mediates the biosynthesis of a family of 2-pyridones known as leporins. The hybrid PKS-NRPS synthetase lepA and the enoyl reductase lepG are responsible for fusion of phenylalanine with a hexaketide and subsequent release of the stable tetramic acid precursor, pre-leporin C. Because lepA lacks a designated enoylreductase (ER) domain, the required activity is provided the enoyl reductase lepG. It is possible that the dehydrogenase lepF also participates in production of pre-leporin C. Cytochrome P450 monooxygenase lepH is then required for the ring expansion step to yield leporin C. Leporin C is then presumably further oxidized by the N-hydroxylase lepD to form leporin B. LepI may possess a function in biosynthesis upstream of lepA. Leporin B is further oxidized in the presence of ferric ion to give the leporin B trimer-iron chelate, but whether or not this reaction is catalyzed by an enzyme in the pathway or by ferric ion is not determined yet. This Aspergillus flavus (strain ATCC 200026 / FGSC A1120 / IAM 13836 / NRRL 3357 / JCM 12722 / SRRC 167) protein is Cytochrome P450 monooxygenase lepD.